Here is a 724-residue protein sequence, read N- to C-terminus: Probable serine/threonine-protein kinase KKQ8 (724 aa).

Disordered stretches follow at residues 1-81 and 93-188; these read MVMQ…RQRS and HPFR…KDIL. Residue Ser-19 is modified to Phosphoserine. Residues 45–54 show a composition bias toward low complexity; it reads PYRSSSTSPK. Positions 95–106 are enriched in polar residues; the sequence is FRQTGSGASNSP. Low complexity predominate over residues 143-162; it reads RSSSVSSCDSSNGTTSSSDS. A phosphoserine mark is found at Ser-232, Ser-238, and Ser-241. Residues 329 to 355 are disordered; sequence SQTNHEKRTGQSPNDSNRSSPTQGRED. Positions 338 to 351 are enriched in polar residues; the sequence is GQSPNDSNRSSPTQ. In terms of domain architecture, Protein kinase spans 412 to 712; it reads GHPVGLVGAG…VGKLLDMQWM (301 aa). ATP contacts are provided by residues 418-426 and Lys-455; that span reads VGAGAYGEV. Residue Asp-563 is the Proton acceptor of the active site.

This sequence belongs to the protein kinase superfamily. CAMK Ser/Thr protein kinase family. NPR/HAL subfamily. HAL5 sub-subfamily.

The protein localises to the cytoplasm. The enzyme catalyses L-seryl-[protein] + ATP = O-phospho-L-seryl-[protein] + ADP + H(+). It carries out the reaction L-threonyl-[protein] + ATP = O-phospho-L-threonyl-[protein] + ADP + H(+). In Saccharomyces cerevisiae (strain ATCC 204508 / S288c) (Baker's yeast), this protein is Probable serine/threonine-protein kinase KKQ8 (KKQ8).